The chain runs to 473 residues: Photosystem II CP43 reaction center protein (473 aa).

Residues 1-14 (MKTLYSLRRFYPVE) constitute a propeptide that is removed on maturation. Threonine 15 is subject to N-acetylthreonine. A Phosphothreonine modification is found at threonine 15. Helical transmembrane passes span 69–93 (LFEV…PHLA), 134–155 (LLGP…KDRN), 178–200 (KALY…RKIT), 255–275 (KPFA…LSYS), and 291–312 (WFNN…ASQA). Residue glutamate 367 participates in [CaMn4O5] cluster binding. A helical transmembrane segment spans residues 447–471 (RARAAAAGFEKGIDRDFEPVLSMTP).

Belongs to the PsbB/PsbC family. PsbC subfamily. As to quaternary structure, PSII is composed of 1 copy each of membrane proteins PsbA, PsbB, PsbC, PsbD, PsbE, PsbF, PsbH, PsbI, PsbJ, PsbK, PsbL, PsbM, PsbT, PsbX, PsbY, PsbZ, Psb30/Ycf12, at least 3 peripheral proteins of the oxygen-evolving complex and a large number of cofactors. It forms dimeric complexes. Requires Binds multiple chlorophylls and provides some of the ligands for the Ca-4Mn-5O cluster of the oxygen-evolving complex. It may also provide a ligand for a Cl- that is required for oxygen evolution. PSII binds additional chlorophylls, carotenoids and specific lipids. as cofactor.

The protein resides in the plastid. It localises to the chloroplast thylakoid membrane. In terms of biological role, one of the components of the core complex of photosystem II (PSII). It binds chlorophyll and helps catalyze the primary light-induced photochemical processes of PSII. PSII is a light-driven water:plastoquinone oxidoreductase, using light energy to abstract electrons from H(2)O, generating O(2) and a proton gradient subsequently used for ATP formation. The polypeptide is Photosystem II CP43 reaction center protein (Panax ginseng (Korean ginseng)).